The chain runs to 182 residues: Inner membrane-spanning protein YciB (182 aa).

A run of 5 helical transmembrane segments spans residues 22-42 (IYIA…VTYA), 50-70 (MHLI…IFHD), 72-92 (AFIK…LAVS), 118-138 (VTWY…YVAF), and 148-168 (FKVF…VVYL).

It belongs to the YciB family.

It is found in the cell inner membrane. Functionally, plays a role in cell envelope biogenesis, maintenance of cell envelope integrity and membrane homeostasis. This chain is Inner membrane-spanning protein YciB, found in Shewanella woodyi (strain ATCC 51908 / MS32).